We begin with the raw amino-acid sequence, 694 residues long: Long-chain-fatty-acid--CoA ligase 4 (694 aa).

The segment at 1–21 is disordered; the sequence is MTEQYSVAVGEAANEHETAPR. ATP is bound at residue 269–280; the sequence is YTSGSTGTPKGV. An FACS motif is present at residues 527 to 576; it reads DGWFRTGDIAEWTPKGQVKIIDRKKNLVKTLNGEYIALEKLESIYRSNPY.

This sequence belongs to the ATP-dependent AMP-binding enzyme family. As to quaternary structure, interacts with FAT1. The cofactor is Mg(2+).

Its subcellular location is the lipid droplet. It carries out the reaction a long-chain fatty acid + ATP + CoA = a long-chain fatty acyl-CoA + AMP + diphosphate. The enzyme catalyses (9Z)-hexadecenoate + ATP + CoA = (9Z)-hexadecenoyl-CoA + AMP + diphosphate. It catalyses the reaction (9Z)-octadecenoate + ATP + CoA = (9Z)-octadecenoyl-CoA + AMP + diphosphate. The catalysed reaction is hexadecanoate + ATP + CoA = hexadecanoyl-CoA + AMP + diphosphate. Activates long-chain fatty acids (LCFA) by esterification of the fatty acids into metabolically active CoA-thioesters for subsequent degradation or incorporation into phospholipids. Also facilitates the transport of LCFAs into the cell, either by active transport or by decreasing the intracellular LCFA concentration. Contributes, with FAA1, to the activation of imported myristate. Also involved in long-chain base (LCB) uptake. In contrast ot LCFA uptake, LCB uptake does not require ATP, suggesting that the enzyme is directly involved in LCB uptake. Involved in the sphingolipid-to-glycerolipid metabolic pathway, converting the sphingolipid metabolite hexadecenoic acid to hexadecenoyl-CoA, which is then further converted to glycerolipids. In Saccharomyces cerevisiae (strain ATCC 204508 / S288c) (Baker's yeast), this protein is Long-chain-fatty-acid--CoA ligase 4 (FAA4).